We begin with the raw amino-acid sequence, 617 residues long: Vacuolar protein sorting-associated protein 33B (617 aa).

Alanine 2 carries the N-acetylalanine modification.

This sequence belongs to the STXBP/unc-18/SEC1 family. Interacts with RAB11A and VIPAS39. Associates with adapter protein complex 3 (AP-3), clathrin:AP-3 and clathrin:HGS complexes. In terms of processing, phosphorylated on tyrosine residues.

It localises to the late endosome membrane. The protein resides in the lysosome membrane. Its subcellular location is the early endosome. The protein localises to the cytoplasmic vesicle. It is found in the clathrin-coated vesicle. It localises to the recycling endosome. In terms of biological role, may play a role in vesicle-mediated protein trafficking to lysosomal compartments and in membrane docking/fusion reactions of late endosomes/lysosomes. Required for proper trafficking and targeting of the collagen-modifying enzyme lysyl hydroxylase 3 (LH3) to intracellular collagen. Mediates phagolysosomal fusion in macrophages. Proposed to be involved in endosomal maturation implicating in part VIPAS39. In epithelial cells, the VPS33B:VIPAS39 complex may play a role in the apical RAB11A-dependentrecycling pathway and in the maintenance of the apical-basolateral polarity. Seems to be involved in the sorting of specific cargos from the trans-Golgi network to alpha-granule-destined multivesicular bodies (MVBs) promoting MVBs maturation in megakaryocytes. In Mus musculus (Mouse), this protein is Vacuolar protein sorting-associated protein 33B (Vps33b).